We begin with the raw amino-acid sequence, 503 residues long: Arginyl-tRNA--protein transferase 1 (503 aa).

It belongs to the R-transferase family.

The protein resides in the cytoplasm. It catalyses the reaction an N-terminal L-alpha-aminoacyl-[protein] + L-arginyl-tRNA(Arg) = an N-terminal L-arginyl-L-aminoacyl-[protein] + tRNA(Arg) + H(+). Its function is as follows. Involved in the post-translational conjugation of arginine to the N-terminal aspartate or glutamate of a protein. This arginylation is required for degradation of the protein via the ubiquitin pathway. Does not arginylate cysteine residues. The polypeptide is Arginyl-tRNA--protein transferase 1 (ATE1) (Saccharomyces cerevisiae (strain ATCC 204508 / S288c) (Baker's yeast)).